A 68-amino-acid polypeptide reads, in one-letter code: Metallothionein (68 aa).

The protein belongs to the metallothionein superfamily. Type 4 family.

Metallothioneins have a high content of cysteine residues that bind various heavy metals. The protein is Metallothionein (MT1) of Lytechinus pictus (Painted sea urchin).